Consider the following 372-residue polypeptide: Gustatory and pheromone receptor 39a, isoform B (372 aa).

At 1–32 (MGTRNRKLLFFLHYQRYLGLTNLDFSKSLHIY) the chain is on the cytoplasmic side. The helical transmembrane segment at 33-53 (WLHGTWSSTAIQIVVVGVFMA) threads the bilayer. At 54–59 (ALLGAL) the chain is on the extracellular side. A helical transmembrane segment spans residues 60–80 (AESLYYMETKSQTGNTFDNAV). The Cytoplasmic segment spans residues 81–122 (ILTTSVTQLLANLWLRSQQKSQVNLLQRLSQVVELLQFEPYA). Residues 123–143 (VPQFRWLYRIWLLVCLIYGAM) traverse the membrane as a helical segment. At 144 to 147 (VTHF) the chain is on the extracellular side. A helical membrane pass occupies residues 148–168 (GINWLTTMQISRVLTLIGFVY). The Cytoplasmic portion of the chain corresponds to 169–224 (RCVLANFQFTCYTGMVVILKKLLQVQVKQLEHLVSTTTISMAGVAGCLRTHDEILL). A helical membrane pass occupies residues 225-245 (LGQRELIAVYGGVILFLFIYQ). Residues 246-265 (VMQCILIFYISNLEGFHSSN) lie on the Extracellular side of the membrane. A helical transmembrane segment spans residues 266–286 (DLVLIFCWLAPMLFYLILPLV). At 287–348 (VNDIHNQANK…KSTLFKLFTA (62 aa)) the chain is on the cytoplasmic side. A helical transmembrane segment spans residues 349–368 (IFTYMVILVQFKEMENSTKS). I369 is a topological domain (extracellular).

This sequence belongs to the insect chemoreceptor superfamily. Gustatory receptor (GR) family. Gr21a subfamily. As to expression, expressed in the adult labellar chemosensory neurons. In larvae, is expressed in neurons of the terminal external chemosensory organ, as well as in the dorsal and posterior pharyngeal sense organs.

Its subcellular location is the cell membrane. Functionally, gustatory receptor which mediates acceptance or avoidance behavior, depending on its substrates. Plays a role in sustaining courtship behavior in males, possibly through the reception of a stimulating arrestant pheromone. The sequence is that of Gustatory and pheromone receptor 39a, isoform B (Gr39a) from Drosophila melanogaster (Fruit fly).